The primary structure comprises 1382 residues: Eukaryotic translation initiation factor 3 subunit A (1382 aa).

Lys68 bears the N6-acetyllysine mark. Residues 82–120 (NIKSLEDVVRAYLKMAEEKTEAAKEESQQMVLDIEDLDN) are a coiled coil. A PCI domain is found at 315-498 (MQRMSTRVLL…RTLSFGSDLN (184 aa)). 2 positions are modified to phosphoserine: Ser492 and Ser584. Positions 664-835 (LDPDFIMAKQ…REERERAERA (172 aa)) are interaction with EIF3B. Disordered regions lie at residues 810 to 844 (KEEE…LREY) and 866 to 1382 (EERE…TVRR). 3 stretches are compositionally biased toward basic and acidic residues: residues 866–1165 (EERE…DDSR), 1177–1328 (GWRE…DPPR), and 1336–1371 (SRDR…TKNE). A phosphoserine mark is found at Ser881, Ser882, and Ser895. Repeat unit 1 spans residues 925-934 (DEDRSHRRDE). Residues 925–1172 (DEDRSHRRDE…DSRPGPWRPL (248 aa)) form a 25 X 10 AA approximate tandem repeats of [DE]-[DE]-[DE]-R-[SEVGFPILV]-[HPSN]-[RSW]-[RL]-[DRGTIHN]-[EPMANLGDT] region. The 2; truncated repeat unit spans residues 935–942 (ERPRRLGD). A run of 20 repeats spans residues 943–952 (DEDREPSLRP), 953–962 (DDDRVPRRGM), 963–972 (DDDRGPRRGP), 973–982 (EEDRFSRRGA), 983–992 (DDDRPSWRNT), 993–1002 (DDDRPPRRIA), 1003–1012 (DEDRGNWRHA), 1013–1022 (DDDRPPRRGL), 1023–1032 (DEDRGSWRTA), 1033–1042 (DEDRGPRRGM), 1043–1052 (DDDRGPRRGG), 1054–1063 (DDERSSWRNA), 1064–1073 (DDDRGPRRGL), 1074–1083 (DDDRGPRRGM), 1084–1093 (DDDRGPRRGM), 1094–1103 (DDDRGPRRGM), 1104–1113 (DDDRGPRRGL), 1114–1123 (DDDRGPWRNA), 1124–1133 (DDDRIPRRGA), and 1134–1143 (EDDRGPWRNM). At Ser949 the chain carries Phosphoserine. A Phosphoserine modification is found at Ser1028. The 23; truncated repeat unit spans residues 1144–1152 (DDDRLSRRA). Repeat 24 spans residues 1153–1162 (DDDRFPRRGD). One copy of the 25; approximate repeat lies at 1163-1172 (DSRPGPWRPL). Phosphoserine is present on residues Ser1188, Ser1198, Ser1262, Ser1336, and Ser1364.

In terms of assembly, interacts with EIF4G1. Component of the eukaryotic translation initiation factor 3 (eIF-3) complex, which is composed of 13 subunits: EIF3A, EIF3B, EIF3C, EIF3D, EIF3E, EIF3F, EIF3G, EIF3H, EIF3I, EIF3J, EIF3K, EIF3L and EIF3M. The eIF-3 complex appears to include 3 stable modules: module A is composed of EIF3A, EIF3B, EIF3G and EIF3I; module B is composed of EIF3F, EIF3H, and EIF3M; and module C is composed of EIF3C, EIF3D, EIF3E, EIF3L and EIF3K. EIF3C of module C binds EIF3B of module A and EIF3H of module B, thereby linking the three modules. EIF3J is a labile subunit that binds to the eIF-3 complex via EIF3B. The eIF-3 complex interacts with RPS6KB1 under conditions of nutrient depletion. Mitogenic stimulation leads to binding and activation of a complex composed of MTOR and RPTOR, leading to phosphorylation and release of RPS6KB1 and binding of EIF4B to eIF-3. Also interacts with KRT7 and PIWIL2. In terms of processing, phosphorylated. Phosphorylation is enhanced upon serum stimulation.

Its subcellular location is the cytoplasm. Its function is as follows. RNA-binding component of the eukaryotic translation initiation factor 3 (eIF-3) complex, which is required for several steps in the initiation of protein synthesis. The eIF-3 complex associates with the 40S ribosome and facilitates the recruitment of eIF-1, eIF-1A, eIF-2:GTP:methionyl-tRNAi and eIF-5 to form the 43S pre-initiation complex (43S PIC). The eIF-3 complex stimulates mRNA recruitment to the 43S PIC and scanning of the mRNA for AUG recognition. The eIF-3 complex is also required for disassembly and recycling of post-termination ribosomal complexes and subsequently prevents premature joining of the 40S and 60S ribosomal subunits prior to initiation. The eIF-3 complex specifically targets and initiates translation of a subset of mRNAs involved in cell proliferation, including cell cycling, differentiation and apoptosis, and uses different modes of RNA stem-loop binding to exert either translational activation or repression. Functionally, (Microbial infection) Essential for the initiation of translation on type-1 viral ribosomal entry sites (IRESs), like for HCV, PV, EV71 or BEV translation. (Microbial infection) In case of FCV infection, plays a role in the ribosomal termination-reinitiation event leading to the translation of VP2. This Homo sapiens (Human) protein is Eukaryotic translation initiation factor 3 subunit A.